A 104-amino-acid chain; its full sequence is UPF0473 protein LGAS_0424 (104 aa).

The protein belongs to the UPF0473 family.

This is UPF0473 protein LGAS_0424 from Lactobacillus gasseri (strain ATCC 33323 / DSM 20243 / BCRC 14619 / CIP 102991 / JCM 1131 / KCTC 3163 / NCIMB 11718 / NCTC 13722 / AM63).